Here is a 362-residue protein sequence, read N- to C-terminus: Alternative oxidase, mitochondrial (362 aa).

A mitochondrion-targeting transit peptide spans 1–64 (MNTPKVNILY…RGFTTTSVVR (64 aa)). The helical transmembrane segment at 156–176 (LVRFIFLESIAGVPGMVAGML) threads the bilayer. Residues E163, E202, and H205 each coordinate Fe cation. The helical transmembrane segment at 222–242 (LILGAQGVFFNAMFLSYLVSP) threads the bilayer. Residues E253, E310, and H313 each contribute to the Fe cation site.

It belongs to the alternative oxidase family. Requires Fe cation as cofactor.

It is found in the mitochondrion inner membrane. Functionally, catalyzes cyanide-resistant oxygen consumption. May increase respiration when the cytochrome respiratory pathway is restricted, or in response to low temperatures. This is Alternative oxidase, mitochondrial (aod-1) from Gelasinospora sp. (strain S23).